Reading from the N-terminus, the 1240-residue chain is DNA polymerase II large subunit (1240 aa).

The protein belongs to the archaeal DNA polymerase II family. As to quaternary structure, heterodimer of a large subunit and a small subunit.

It carries out the reaction DNA(n) + a 2'-deoxyribonucleoside 5'-triphosphate = DNA(n+1) + diphosphate. The enzyme catalyses Exonucleolytic cleavage in the 3'- to 5'-direction to yield nucleoside 5'-phosphates.. Possesses two activities: a DNA synthesis (polymerase) and an exonucleolytic activity that degrades single-stranded DNA in the 3'- to 5'-direction. Has a template-primer preference which is characteristic of a replicative DNA polymerase. This Methanopyrus kandleri (strain AV19 / DSM 6324 / JCM 9639 / NBRC 100938) protein is DNA polymerase II large subunit.